A 228-amino-acid polypeptide reads, in one-letter code: UPF0173 metal-dependent hydrolase LMHCC_0991 (228 aa).

This sequence belongs to the UPF0173 family.

The chain is UPF0173 metal-dependent hydrolase LMHCC_0991 from Listeria monocytogenes serotype 4a (strain HCC23).